The sequence spans 340 residues: DNA-directed RNA polymerase subunit alpha (340 aa).

The tract at residues 1–233 is alpha N-terminal domain (alpha-NTD); sequence MYRNWRDLIS…EQLSIFINFD (233 aa). Positions 251–340 are alpha C-terminal domain (alpha-CTD); that stretch reads INENLYRSVD…RLRGERKDEE (90 aa).

The protein belongs to the RNA polymerase alpha chain family. Homodimer. The RNAP catalytic core consists of 2 alpha, 1 beta, 1 beta' and 1 omega subunit. When a sigma factor is associated with the core the holoenzyme is formed, which can initiate transcription.

It catalyses the reaction RNA(n) + a ribonucleoside 5'-triphosphate = RNA(n+1) + diphosphate. Its function is as follows. DNA-dependent RNA polymerase catalyzes the transcription of DNA into RNA using the four ribonucleoside triphosphates as substrates. The sequence is that of DNA-directed RNA polymerase subunit alpha from Geobacter sulfurreducens (strain ATCC 51573 / DSM 12127 / PCA).